The sequence spans 152 residues: Transcriptional regulator MraZ (152 aa).

SpoVT-AbrB domains lie at 5–52 (ASAV…PLNQ) and 81–124 (ATEC…SESE).

Belongs to the MraZ family. Forms oligomers.

The protein resides in the cytoplasm. Its subcellular location is the nucleoid. This chain is Transcriptional regulator MraZ, found in Histophilus somni (strain 129Pt) (Haemophilus somnus).